Reading from the N-terminus, the 788-residue chain is E3 ubiquitin-protein ligase SspH2 (788 aa).

Residues 1-481 (MPFHIGSGCL…PGYSGPIIRF (481 aa)) form an interaction with host membrane and with target proteins region. LRR repeat units lie at residues 223 to 242 (HITTLVIPDNNLTSLPALPP), 243 to 264 (ELRTLEVSGNQLTSLPVLPPGL), 265 to 282 (LELSIFSNPLTHLPALPS), 283 to 302 (GLCKLWIFGNQLTSLPVLPP), 303 to 324 (GLQELSVSDNQLASLPALPSEL), 325 to 342 (CKLWAYNNQLTSLPMLPS), 343 to 364 (GLQELSVSDNQLASLPTLPSEL), 365 to 382 (YKLWAYNNRLTSLPALPS), 383 to 404 (GLKELIVSGNRLTSLPVLPSEL), 405 to 422 (KELMVSGNRLTSLPMLPS), 423 to 445 (GLLSLSVYRNQLTRLPESLIHLS), and 446 to 466 (SETTVNLEGNPLSERTLQALR). The interval 482–491 (DMAGASAPRE) is linker. The interval 492–788 (TRALHLAAAD…SYLNVQWRRN (297 aa)) is E3 ubiquitin-protein ligase catalytic domain. An NEL domain is found at 494–788 (ALHLAAADWL…SYLNVQWRRN (295 aa)). C580 serves as the catalytic Glycyl thioester intermediate.

This sequence belongs to the LRR-containing bacterial E3 ligase family. In terms of processing, ubiquitinated in the presence of host E1 ubiquitin-activating enzyme UBA1, E2 ubiquitin-conjugating enzyme UBE2D2 and ubiquitin.

The protein resides in the secreted. It is found in the host cytoplasm. Its subcellular location is the host apical cell membrane. It carries out the reaction S-ubiquitinyl-[E2 ubiquitin-conjugating enzyme]-L-cysteine + [acceptor protein]-L-lysine = [E2 ubiquitin-conjugating enzyme]-L-cysteine + N(6)-ubiquitinyl-[acceptor protein]-L-lysine.. Its activity is regulated as follows. Exists in an autoinhibited state in the absence of substrate protein, due to interactions of the leucine-rich repeat domain with the catalytic domain. Is activated upon binding to a substrate protein. Effector proteins function to alter host cell physiology and promote bacterial survival in host tissues. This protein is an E3 ubiquitin ligase that interferes with host's ubiquitination pathway. The polypeptide is E3 ubiquitin-protein ligase SspH2 (sspH2) (Salmonella typhimurium (strain LT2 / SGSC1412 / ATCC 700720)).